Here is a 168-residue protein sequence, read N- to C-terminus: Skp-like protein (168 aa).

A signal peptide spans Met1–Ala22.

This sequence belongs to the Skp family.

The sequence is that of Skp-like protein from Pseudomonas aeruginosa (strain ATCC 15692 / DSM 22644 / CIP 104116 / JCM 14847 / LMG 12228 / 1C / PRS 101 / PAO1).